Reading from the N-terminus, the 493-residue chain is Probable cytosol aminopeptidase (493 aa).

Mn(2+) is bound by residues Lys260 and Asp265. The active site involves Lys272. The Mn(2+) site is built by Asp283, Asp342, and Glu344. Arg346 is an active-site residue.

It belongs to the peptidase M17 family. Mn(2+) is required as a cofactor.

The protein localises to the cytoplasm. The enzyme catalyses Release of an N-terminal amino acid, Xaa-|-Yaa-, in which Xaa is preferably Leu, but may be other amino acids including Pro although not Arg or Lys, and Yaa may be Pro. Amino acid amides and methyl esters are also readily hydrolyzed, but rates on arylamides are exceedingly low.. It catalyses the reaction Release of an N-terminal amino acid, preferentially leucine, but not glutamic or aspartic acids.. Functionally, presumably involved in the processing and regular turnover of intracellular proteins. Catalyzes the removal of unsubstituted N-terminal amino acids from various peptides. In Clostridium perfringens (strain 13 / Type A), this protein is Probable cytosol aminopeptidase.